A 302-amino-acid polypeptide reads, in one-letter code: Sulfate adenylyltransferase subunit 2 (302 aa).

Residues 279–302 (ERQGRAIDHDQSGSMELKKRQGYF) are disordered. Residues 280–302 (RQGRAIDHDQSGSMELKKRQGYF) show a composition bias toward basic and acidic residues.

This sequence belongs to the PAPS reductase family. CysD subfamily. In terms of assembly, heterodimer composed of CysD, the smaller subunit, and CysN.

It carries out the reaction sulfate + ATP + H(+) = adenosine 5'-phosphosulfate + diphosphate. Its pathway is sulfur metabolism; hydrogen sulfide biosynthesis; sulfite from sulfate: step 1/3. Functionally, with CysN forms the ATP sulfurylase (ATPS) that catalyzes the adenylation of sulfate producing adenosine 5'-phosphosulfate (APS) and diphosphate, the first enzymatic step in sulfur assimilation pathway. APS synthesis involves the formation of a high-energy phosphoric-sulfuric acid anhydride bond driven by GTP hydrolysis by CysN coupled to ATP hydrolysis by CysD. In Photobacterium profundum (strain SS9), this protein is Sulfate adenylyltransferase subunit 2.